The sequence spans 423 residues: Glutamate-1-semialdehyde 2,1-aminomutase (423 aa).

The residue at position 266 (Lys266) is an N6-(pyridoxal phosphate)lysine.

The protein belongs to the class-III pyridoxal-phosphate-dependent aminotransferase family. HemL subfamily. As to quaternary structure, homodimer. The cofactor is pyridoxal 5'-phosphate.

The protein resides in the cytoplasm. The catalysed reaction is (S)-4-amino-5-oxopentanoate = 5-aminolevulinate. It functions in the pathway porphyrin-containing compound metabolism; protoporphyrin-IX biosynthesis; 5-aminolevulinate from L-glutamyl-tRNA(Glu): step 2/2. The polypeptide is Glutamate-1-semialdehyde 2,1-aminomutase (Desulfovibrio desulfuricans (strain ATCC 27774 / DSM 6949 / MB)).